Consider the following 58-residue polypeptide: Large ribosomal subunit protein bL32 (58 aa).

Belongs to the bacterial ribosomal protein bL32 family.

This chain is Large ribosomal subunit protein bL32, found in Prochlorococcus marinus (strain MIT 9515).